The primary structure comprises 473 residues: Beta-secretase 1 (473 aa).

The N-terminal stretch at 1-21 (MAPALPWLLLWVGSGVLPVHG) is a signal peptide. Residues 22 to 45 (TQDGIRLPLRSGLAGAPLGLRLPR) constitute a propeptide that is removed on maturation. Residues 22-429 (TQDGIRLPLR…PQTDESTLMT (408 aa)) are Extracellular-facing. The Peptidase A1 domain maps to 72-388 (YYVEMTVGSP…DRARKRIGFA (317 aa)). D90 is an active-site residue. K123 bears the N6-acetyllysine mark. Residues N150, N169, and N195 are each glycosylated (N-linked (GlcNAc...) asparagine). Cystine bridges form between C188/C392, C250/C415, and C302/C352. N6-acetyllysine occurs at positions 247, 251, and 257. The active site involves D261. N6-acetyllysine occurs at positions 271, 272, and 279. N326 is a glycosylation site (N-linked (GlcNAc...) asparagine). The chain crosses the membrane as a helical span at residues 430–450 (IAYVMAAICALFMLPLCLMVC). Residues C446, C450, C454, and C457 are each lipidated (S-palmitoyl cysteine). The Cytoplasmic segment spans residues 451-473 (QWRCLRCLRHQHDDFADDISLLK). The tract at residues 451–473 (QWRCLRCLRHQHDDFADDISLLK) is interaction with RTN3. A DXXLL motif is present at residues 468-472 (DISLL). S470 is subject to Phosphoserine. K473 is covalently cross-linked (Glycyl lysine isopeptide (Lys-Gly) (interchain with G-Cter in ubiquitin)).

Belongs to the peptidase A1 family. As to quaternary structure, monomer. Interacts (via DXXLL motif) with GGA1, GGA2 and GGA3 (via their VHS domain); the interaction highly increases when BACE1 is phosphorylated at Ser-470. Interacts with RTN1; RTN2; RTN3 and RTN4; the interaction leads to inhibition of amyloid precursor protein processing. Interacts with SNX6. Interacts with PCSK9. Interacts with NAT8 and NAT8B. Interacts with BIN1. Interacts (via extracellular domain) with ADAM10 (via extracellular domain). Interacts with SORL1; this interaction may affect binding with APP and hence reduce APP cleavage. Interacts with NRDC AND NRG1. In terms of processing, palmitoylation mediates lipid raft localization. Post-translationally, acetylated in the endoplasmic reticulum at Lys-123, Lys-247, Lys-251, Lys-257, Lys-271, Lys-272, and Lys-279. Acetylation by NAT8 and NAT8B is transient and deacetylation probably occurs in the Golgi. Acetylation regulates the maturation, the transport to the plasma membrane, the stability and the expression of the protein. Ubiquitinated at Lys-473, ubiquitination leads to lysosomal degradation. Monoubiquitinated and 'Lys-63'-linked polyubitinated. Deubiquitnated by USP8; inhibits lysosomal degradation. In terms of processing, phosphorylation at Ser-470 is required for interaction with GGA1 and retrograded transport from endosomal compartments to the trans-Golgi network. Non-phosphorylated BACE1 enters a direct recycling route to the cell surface. Post-translationally, N-Glycosylated. Addition of a bisecting N-acetylglucosamine by MGAT3 blocks lysosomal targeting, further degradation and is required for maintaining stability under stress conditions.

It localises to the cell membrane. The protein localises to the golgi apparatus. The protein resides in the trans-Golgi network. It is found in the endoplasmic reticulum. Its subcellular location is the endosome. It localises to the cell surface. The protein localises to the cytoplasmic vesicle membrane. The protein resides in the membrane raft. It is found in the lysosome. Its subcellular location is the late endosome. It localises to the early endosome. The protein localises to the recycling endosome. The protein resides in the cell projection. It is found in the axon. Its subcellular location is the dendrite. The catalysed reaction is Broad endopeptidase specificity. Cleaves Glu-Val-Asn-Leu-|-Asp-Ala-Glu-Phe in the Swedish variant of Alzheimer's amyloid precursor protein.. Its activity is regulated as follows. Inhibited by RTN3 and RTN4. Its function is as follows. Responsible for the proteolytic processing of the amyloid precursor protein (APP). Cleaves at the N-terminus of the A-beta peptide sequence, between residues 671 and 672 of APP, leads to the generation and extracellular release of beta-cleaved soluble APP, and a corresponding cell-associated C-terminal fragment which is later released by gamma-secretase. Cleaves CHL1. The polypeptide is Beta-secretase 1 (BACE1) (Cavia porcellus (Guinea pig)).